A 260-amino-acid chain; its full sequence is Ubiquinone/menaquinone biosynthesis C-methyltransferase UbiE (260 aa).

S-adenosyl-L-methionine-binding positions include threonine 83, aspartate 104, and asparagine 132–alanine 133.

Belongs to the class I-like SAM-binding methyltransferase superfamily. MenG/UbiE family.

It carries out the reaction a 2-demethylmenaquinol + S-adenosyl-L-methionine = a menaquinol + S-adenosyl-L-homocysteine + H(+). The enzyme catalyses a 2-methoxy-6-(all-trans-polyprenyl)benzene-1,4-diol + S-adenosyl-L-methionine = a 5-methoxy-2-methyl-3-(all-trans-polyprenyl)benzene-1,4-diol + S-adenosyl-L-homocysteine + H(+). Its pathway is quinol/quinone metabolism; menaquinone biosynthesis; menaquinol from 1,4-dihydroxy-2-naphthoate: step 2/2. It functions in the pathway cofactor biosynthesis; ubiquinone biosynthesis. Functionally, methyltransferase required for the conversion of demethylmenaquinol (DMKH2) to menaquinol (MKH2) and the conversion of 2-polyprenyl-6-methoxy-1,4-benzoquinol (DDMQH2) to 2-polyprenyl-3-methyl-6-methoxy-1,4-benzoquinol (DMQH2). This chain is Ubiquinone/menaquinone biosynthesis C-methyltransferase UbiE, found in Bartonella quintana (strain Toulouse) (Rochalimaea quintana).